The sequence spans 117 residues: Non-specific lipid-transfer protein 1 (117 aa).

The N-terminal stretch at 1–26 (MARAQVLLMAAALVLMLTAAPRAAVA) is a signal peptide. 4 cysteine pairs are disulfide-bonded: Cys-29-Cys-76, Cys-39-Cys-53, Cys-54-Cys-99, and Cys-74-Cys-113. Asp-33 is lipidated: Cis-14-hydroxy-10,13-dioxo-7-heptadecenoic acid aspartate ester.

The protein belongs to the plant LTP family. Aleurone layer of developing and germinating seeds.

In terms of biological role, plant non-specific lipid-transfer proteins transfer phospholipids as well as galactolipids across membranes. May play a role in wax or cutin deposition in the cell walls of expanding epidermal cells and certain secretory tissues. This chain is Non-specific lipid-transfer protein 1 (LTP1), found in Hordeum vulgare (Barley).